The chain runs to 416 residues: MRRTQQGTTASPPVLDLGALGQDFAADPYPTYARLRAEGPAHRVRTPEGDEVWLVVGYDRARAVLADPRFSKDWRNSTTPLTEAEAALNHNMLESDPPRHTRLRKLVAREFTMRRVELLRPRVQEIVDGLVDAMLAAPDGRADLMESLAWPLPITVISELLGVPEPDRAAFRVWTDAFVFPDDPAQAQTAMAEMSGYLSRLIDSKRGQDGEDLLSALVRTSDEDGSRLTSEELLGMAHILLVAGHETTVNLIANGMYALLSHPDQLAALRADMTLLDGAVEEMLRYEGPVESATYRFPVEPVDLDGTVIPAGDTVLVVLADAHRTPERFPDPHRFDIRRDTAGHLAFGHGIHFCIGAPLARLEARIAVRALLERCPDLALDVSPGELVWYPNPMIRGLKALPIRWRRGREAGRRTG.

Substrate contacts are provided by residues Glu-94, 187 to 191 (AQTAM), and 238 to 246 (HILLVAGHE). Cys-354 is a heme binding site.

It belongs to the cytochrome P450 family. The cofactor is heme.

It catalyses the reaction narbomycin + 2 reduced [2Fe-2S]-[ferredoxin] + O2 + 2 H(+) = pikromycin + 2 oxidized [2Fe-2S]-[ferredoxin] + H2O. The catalysed reaction is narbomycin + 2 reduced [2Fe-2S]-[ferredoxin] + O2 + 2 H(+) = neopikromycin + 2 oxidized [2Fe-2S]-[ferredoxin] + H2O. The enzyme catalyses narbomycin + 4 reduced [2Fe-2S]-[ferredoxin] + 2 O2 + 4 H(+) = novapikromycin + 4 oxidized [2Fe-2S]-[ferredoxin] + 2 H2O. It carries out the reaction 10-deoxymethymycin + 2 reduced [2Fe-2S]-[ferredoxin] + O2 + 2 H(+) = methymycin + 2 oxidized [2Fe-2S]-[ferredoxin] + H2O. It catalyses the reaction 10-deoxymethymycin + 2 reduced [2Fe-2S]-[ferredoxin] + O2 + 2 H(+) = neomethymycin + 2 oxidized [2Fe-2S]-[ferredoxin] + H2O. The catalysed reaction is 10-deoxymethymycin + 4 reduced [2Fe-2S]-[ferredoxin] + 2 O2 + 4 H(+) = novamethymycin + 4 oxidized [2Fe-2S]-[ferredoxin] + 2 H2O. The protein operates within antibiotic biosynthesis. Functionally, catalyzes the hydroxylation of narbomycin to give rise to pikromycin, and of 10-deoxymethymycin (YC-17) to give rise to methymycin and neomethymycin during macrolide antibiotic biosynthesis. In addition, produces low amounts of neopicromycin, novapikromycin and novamethymycin. Requires the participation of a ferredoxin and a ferredoxin reductase for the transfer of electrons from NADPH to the monooxygenase. The polypeptide is Cytochrome P450 monooxygenase PikC (Streptomyces venezuelae).